The chain runs to 125 residues: UPF0102 protein PBPRA3228 (125 aa).

The protein belongs to the UPF0102 family.

This Photobacterium profundum (strain SS9) protein is UPF0102 protein PBPRA3228.